A 2647-amino-acid chain; its full sequence is Filamin-A (2647 aa).

The segment covering methionine 1–alanine 15 has biased composition (low complexity). The disordered stretch occupies residues methionine 1–alanine 39. Serine 2 carries the post-translational modification N-acetylserine. Positions serine 2–proline 274 are actin-binding. Serine 11 carries the phosphoserine modification. The segment covering aspartate 22–alanine 39 has biased composition (basic and acidic residues). Glycyl lysine isopeptide (Lys-Gly) (interchain with G-Cter in ubiquitin) cross-links involve residues lysine 42, lysine 43, and lysine 135. Calponin-homology (CH) domains are found at residues lysine 43–serine 149 and glutamine 166–leucine 269. The disordered stretch occupies residues proline 271–threonine 294. 15 Filamin repeats span residues arginine 276–valine 374, lysine 376–valine 474, glycine 475–valine 570, glycine 571–isoleucine 663, proline 667–valine 763, glycine 764–valine 866, glutamate 867–valine 965, serine 966–alanine 1061, valine 1062–valine 1154, valine 1155–valine 1249, glutamate 1250–valine 1349, threonine 1350–valine 1442, histidine 1443–valine 1539, leucine 1540–alanine 1636, and valine 1649–alanine 1740. Residue lysine 299 forms a Glycyl lysine isopeptide (Lys-Gly) (interchain with G-Cter in SUMO1); alternate linkage. Lysine 299 is covalently cross-linked (Glycyl lysine isopeptide (Lys-Gly) (interchain with G-Cter in SUMO2); alternate). Lysine 376 and lysine 508 each carry N6-acetyllysine. N6-acetyllysine is present on residues lysine 700, lysine 781, lysine 837, lysine 865, and lysine 906. Residues serine 968 and serine 1055 each carry the phosphoserine modification. Lysine 1071 carries the post-translational modification N6-acetyllysine; alternate. Lysine 1071 carries the post-translational modification N6-succinyllysine; alternate. A phosphoserine mark is found at serine 1081 and serine 1084. Threonine 1089 bears the Phosphothreonine mark. A phosphoserine mark is found at serine 1301 and serine 1338. Residues histidine 1361–glycine 1382 form a disordered region. N6-acetyllysine is present on lysine 1372. Phosphoserine occurs at positions 1459 and 1533. An interaction with furin region spans residues proline 1490–alanine 1607. Lysine 1538 carries the N6-acetyllysine modification. Residues serine 1630 and serine 1734 each carry the phosphoserine modification. The interval leucine 1741–valine 1778 is hinge 1. Filamin repeat units lie at residues glycine 1779 to valine 1860, aspartate 1861 to alanine 1950, arginine 1951 to isoleucine 2039, serine 2042 to serine 2131, valine 2132 to valine 2230, leucine 2233 to valine 2325, serine 2327 to valine 2420, and glycine 2424 to valine 2516. Residue serine 1835 is modified to Phosphoserine. Phosphoserine is present on residues serine 1967, serine 2053, serine 2128, serine 2152, serine 2158, serine 2163, serine 2180, serine 2284, serine 2327, and serine 2329. Threonine 2336 bears the Phosphothreonine mark. 6 positions are modified to phosphoserine: serine 2338, serine 2370, serine 2414, serine 2510, serine 2523, and serine 2526. Residues threonine 2517–glycine 2551 form a hinge 2 region. A self-association site, tail region spans residues threonine 2517–proline 2647. One copy of the Filamin 24 repeat lies at proline 2552–valine 2646. Lysine 2569 bears the N6-acetyllysine; alternate mark. Position 2569 is an N6-succinyllysine; alternate (lysine 2569). An N6-acetyllysine modification is found at lysine 2575. Threonine 2599 carries the phosphothreonine modification. N6-acetyllysine is present on residues lysine 2607 and lysine 2621.

The protein belongs to the filamin family. In terms of assembly, homodimer. Interacts with PDLIM2. Interacts with RFLNA and RFLNB. Interacts with FCGR1A, FLNB, FURIN, HSPB7, INPPL1, KCND2, MYOT, MYOZ1, ARHGAP24, PSEN1, PSEN2 and ECSCR. Also interacts with various other binding partners in addition to filamentous actin. Interacts (via N-terminus) with MIS18BP1 (via N-terminus). Interacts (via N-terminus) with TAF1B. Interacts with TMEM67 (via C-terminus) and MKS1. Interacts (via actin-binding domain) with MICALL2 (via CH domain). Interacts (via filamin repeat 5) with SYK; docks SYK to the plasma membrane. Interacts (via filamin repeats 19 and 21) with DRD3; increased PKA-mediated phosphorylation at Ser-2152. Interacts (via filamin repeat 21) with MAS1, AGTR1 and ADRA1D; increases PKA-mediated phosphorylation of FLNA at Ser-2152. Interacts (via filamin repeats 4, 9, 12, 17, 19, 21, and 23) with GP1BA (high affinity), ITGB7, ITGB2 and FBLIM1. Interacts with CEACAM1 (via cytoplasmic domain); inhibits cell migration and cell scattering by interfering with the interaction between FLNA and RALA. Interacts with FOXC1. Interacts (via calponin-homology (CH) domain 1 and filamin repeat 24) with CRMP1; the interaction alters FLNA ternary structure and thus promotes FLNA dissociation from F-actin. Interacts with DPYSL3/CRMP3 and DPYSL4/CRMP4. As to quaternary structure, interacts with integrin ITGB1 isoform 1/beta-1A and isoform 5/beta-1D. Interacts with LUZP1; the interaction is not necessary for colocalization of LUZP1 with F-actin. Phosphorylation at Ser-2152 is negatively regulated by the autoinhibited conformation of filamin repeats 19-21. Ligand binding induces a conformational switch triggering phosphorylation at Ser-2152 by PKA. In terms of processing, phosphorylation extent changes in response to cell activation. Post-translationally, polyubiquitination in the CH1 domain by a SCF-like complex containing ASB2 leads to proteasomal degradation. Prior dissociation from actin may be required to expose the target lysines. Ubiquitinated in endothelial cells by RNF213 downstream of the non-canonical Wnt signaling pathway, leading to its degradation by the proteasome. Ubiquitous.

The protein resides in the cytoplasm. It localises to the cell cortex. The protein localises to the cytoskeleton. It is found in the perikaryon. Its subcellular location is the cell projection. The protein resides in the growth cone. It localises to the podosome. Functionally, promotes orthogonal branching of actin filaments and links actin filaments to membrane glycoproteins. Anchors various transmembrane proteins to the actin cytoskeleton and serves as a scaffold for a wide range of cytoplasmic signaling proteins. Interaction with FLNB may allow neuroblast migration from the ventricular zone into the cortical plate. Tethers cell surface-localized furin, modulates its rate of internalization and directs its intracellular trafficking. Involved in ciliogenesis. Plays a role in cell-cell contacts and adherens junctions during the development of blood vessels, heart and brain organs. Plays a role in platelets morphology through interaction with SYK that regulates ITAM- and ITAM-like-containing receptor signaling, resulting in by platelet cytoskeleton organization maintenance. During the axon guidance process, required for growth cone collapse induced by SEMA3A-mediated stimulation of neurons. In Homo sapiens (Human), this protein is Filamin-A (FLNA).